Here is a 276-residue protein sequence, read N- to C-terminus: Type II pantothenate kinase (276 aa).

8–15 (DAGGTLTK) is a binding site for ATP. The active-site Proton acceptor is the Glu-76. ATP-binding positions include Thr-105, 127-131 (GGTIM), Phe-143, and Ser-230.

Belongs to the type II pantothenate kinase family. As to quaternary structure, homodimer.

It is found in the cytoplasm. The enzyme catalyses (R)-pantothenate + ATP = (R)-4'-phosphopantothenate + ADP + H(+). It functions in the pathway cofactor biosynthesis; coenzyme A biosynthesis; CoA from (R)-pantothenate: step 1/5. Catalyzes the phosphorylation of pantothenate (Pan), the first step in CoA biosynthesis. This Bacillus cereus (strain AH820) protein is Type II pantothenate kinase.